The primary structure comprises 142 residues: Large ribosomal subunit protein uL11 (142 aa).

The protein belongs to the universal ribosomal protein uL11 family. Part of the ribosomal stalk of the 50S ribosomal subunit. Interacts with L10 and the large rRNA to form the base of the stalk. L10 forms an elongated spine to which L12 dimers bind in a sequential fashion forming a multimeric L10(L12)X complex. In terms of processing, one or more lysine residues are methylated.

Its function is as follows. Forms part of the ribosomal stalk which helps the ribosome interact with GTP-bound translation factors. This chain is Large ribosomal subunit protein uL11, found in Mycobacteroides abscessus (strain ATCC 19977 / DSM 44196 / CCUG 20993 / CIP 104536 / JCM 13569 / NCTC 13031 / TMC 1543 / L948) (Mycobacterium abscessus).